Consider the following 91-residue polypeptide: Small ribosomal subunit protein uS19 (91 aa).

It belongs to the universal ribosomal protein uS19 family.

Functionally, protein S19 forms a complex with S13 that binds strongly to the 16S ribosomal RNA. The sequence is that of Small ribosomal subunit protein uS19 from Bordetella avium (strain 197N).